We begin with the raw amino-acid sequence, 260 residues long: Carbonic anhydrase 3 (260 aa).

Alanine 2 bears the N-acetylalanine mark. An Alpha-carbonic anhydrase domain is found at 3–259 (KEWGYADHNG…IKGRIVKASF (257 aa)). A phosphoserine mark is found at serine 29, serine 43, serine 50, and serine 55. The segment at 64–67 (KTCR) is involved in proton transfer. Position 73 is a phosphothreonine (threonine 73). Zn(2+) contacts are provided by histidine 94, histidine 96, and histidine 119. At tyrosine 127 the chain carries Phosphotyrosine. S-glutathionyl cysteine is present on residues cysteine 182 and cysteine 187. 198 to 199 (TT) lines the substrate pocket. Threonine 216 carries the phosphothreonine modification. At serine 219 the chain carries Phosphoserine.

Belongs to the alpha-carbonic anhydrase family. Zn(2+) is required as a cofactor. Post-translationally, S-thiolated both by thiol-disulfide exchange with glutathione disulfide and by oxyradical-initiated S-thiolation with reduced glutathione. S-glutathionylated in hepatocytes under oxidative stress.

Its subcellular location is the cytoplasm. The catalysed reaction is hydrogencarbonate + H(+) = CO2 + H2O. Inhibited by acetazolamide. Reversible hydration of carbon dioxide. This is Carbonic anhydrase 3 (CA3) from Bos taurus (Bovine).